The following is a 292-amino-acid chain: NAD kinase (292 aa).

Aspartate 73 (proton acceptor) is an active-site residue. NAD(+) is bound by residues 73–74 (DG), 147–148 (NE), histidine 158, arginine 175, aspartate 177, 188–193 (TAYSLS), and glutamine 247.

It belongs to the NAD kinase family. The cofactor is a divalent metal cation.

The protein resides in the cytoplasm. It carries out the reaction NAD(+) + ATP = ADP + NADP(+) + H(+). Its function is as follows. Involved in the regulation of the intracellular balance of NAD and NADP, and is a key enzyme in the biosynthesis of NADP. Catalyzes specifically the phosphorylation on 2'-hydroxyl of the adenosine moiety of NAD to yield NADP. The sequence is that of NAD kinase from Salmonella choleraesuis (strain SC-B67).